The following is a 110-amino-acid chain: Inner membrane protein YgiZ (110 aa).

Over 1–8 (MLKQKIKT) the chain is Cytoplasmic. Residues 9 to 29 (IFEALLYIMLTYWLIDSFFAF) traverse the membrane as a helical segment. Over 30–53 (NKYDWMLESGGNICSIPSVSGEDR) the chain is Periplasmic. A helical transmembrane segment spans residues 54–74 (ILQAMIAAFFLLTPLIILILR). Over 75-83 (KLFMREMFE) the chain is Cytoplasmic. The chain crosses the membrane as a helical span at residues 84–104 (FWVYVFSLGICLVCGWWLFWG). The Periplasmic portion of the chain corresponds to 105-110 (RFIFCY).

It is found in the cell inner membrane. The polypeptide is Inner membrane protein YgiZ (ygiZ) (Escherichia coli (strain K12)).